Here is a 327-residue protein sequence, read N- to C-terminus: Vacuolar protein sorting-associated protein 26A (327 aa).

The tract at residues 305-327 (RNFHQRYESPEPRPSLSAEQPEM) is disordered.

It belongs to the VPS26 family. As to quaternary structure, component of the heterotrimeric retromer cargo-selective complex (CSC) which is believed to associate with variable sorting nexins to form functionally distinct retromer complex variants.

The protein localises to the cytoplasm. It is found in the endosome membrane. It localises to the early endosome. Acts as a component of the retromer cargo-selective complex (CSC). The CSC is believed to be the core functional component of retromer or respective retromer complex variants acting to prevent missorting of selected transmembrane cargo proteins into the lysosomal degradation pathway. Retromer mediates retrograde transport of cargo proteins from endosomes to the trans-Golgi network (TGN). This Danio rerio (Zebrafish) protein is Vacuolar protein sorting-associated protein 26A (vps26a).